We begin with the raw amino-acid sequence, 343 residues long: Dual-specificity RNA methyltransferase RlmN (343 aa).

The active-site Proton acceptor is Glu92. The region spanning 98-325 is the Radical SAM core domain; that stretch reads DEDRTTLCIS…VITRSSRGSD (228 aa). A disulfide bridge links Cys105 with Cys330. Positions 112, 116, and 119 each coordinate [4Fe-4S] cluster. S-adenosyl-L-methionine is bound by residues 157 to 158, Ser189, 211 to 213, and Asn287; these read GE and SLN. Cys330 (S-methylcysteine intermediate) is an active-site residue.

The protein belongs to the radical SAM superfamily. RlmN family. The cofactor is [4Fe-4S] cluster.

The protein resides in the cytoplasm. It carries out the reaction adenosine(2503) in 23S rRNA + 2 reduced [2Fe-2S]-[ferredoxin] + 2 S-adenosyl-L-methionine = 2-methyladenosine(2503) in 23S rRNA + 5'-deoxyadenosine + L-methionine + 2 oxidized [2Fe-2S]-[ferredoxin] + S-adenosyl-L-homocysteine. The catalysed reaction is adenosine(37) in tRNA + 2 reduced [2Fe-2S]-[ferredoxin] + 2 S-adenosyl-L-methionine = 2-methyladenosine(37) in tRNA + 5'-deoxyadenosine + L-methionine + 2 oxidized [2Fe-2S]-[ferredoxin] + S-adenosyl-L-homocysteine. In terms of biological role, specifically methylates position 2 of adenine 2503 in 23S rRNA and position 2 of adenine 37 in tRNAs. m2A2503 modification seems to play a crucial role in the proofreading step occurring at the peptidyl transferase center and thus would serve to optimize ribosomal fidelity. The sequence is that of Dual-specificity RNA methyltransferase RlmN from Geotalea uraniireducens (strain Rf4) (Geobacter uraniireducens).